Here is a 205-residue protein sequence, read N- to C-terminus: Thymidylate kinase (205 aa).

Residue 10–17 coordinates ATP; the sequence is GLEGAGKS.

Belongs to the thymidylate kinase family.

It catalyses the reaction dTMP + ATP = dTDP + ADP. Functionally, phosphorylation of dTMP to form dTDP in both de novo and salvage pathways of dTTP synthesis. The protein is Thymidylate kinase of Idiomarina loihiensis (strain ATCC BAA-735 / DSM 15497 / L2-TR).